The sequence spans 648 residues: Macrolide export ATP-binding/permease protein MacB (648 aa).

The 239-residue stretch at 5-243 (LELKDIRRSY…AGGTEPVVNT (239 aa)) folds into the ABC transporter domain. ATP is bound at residue 41–48 (GASGSGKS). 4 helical membrane-spanning segments follow: residues 273-293 (LLTM…VVVG), 523-543 (LFMT…VMNI), 576-596 (AVLV…LIAF), and 611-631 (PLAL…FGWL).

This sequence belongs to the ABC transporter superfamily. Macrolide exporter (TC 3.A.1.122) family. In terms of assembly, homodimer. Part of the tripartite efflux system MacAB-TolC, which is composed of an inner membrane transporter, MacB, a periplasmic membrane fusion protein, MacA, and an outer membrane component, TolC. The complex forms a large protein conduit and can translocate molecules across both the inner and outer membranes. Interacts with MacA.

The protein resides in the cell inner membrane. Part of the tripartite efflux system MacAB-TolC. MacB is a non-canonical ABC transporter that contains transmembrane domains (TMD), which form a pore in the inner membrane, and an ATP-binding domain (NBD), which is responsible for energy generation. Confers resistance against macrolides. This is Macrolide export ATP-binding/permease protein MacB from Escherichia coli O157:H7.